A 61-amino-acid polypeptide reads, in one-letter code: Photosystem II reaction center protein K (61 aa).

A propeptide spanning residues 1 to 24 (MLNIFSLICICLNSVLYSSSFFVA) is cleaved from the precursor. The chain crosses the membrane as a helical span at residues 40–60 (MPVIPVLFFLLAFVWQAAVSF).

The protein belongs to the PsbK family. PSII is composed of 1 copy each of membrane proteins PsbA, PsbB, PsbC, PsbD, PsbE, PsbF, PsbH, PsbI, PsbJ, PsbK, PsbL, PsbM, PsbT, PsbX, PsbY, PsbZ, Psb30/Ycf12, at least 3 peripheral proteins of the oxygen-evolving complex and a large number of cofactors. It forms dimeric complexes.

The protein localises to the plastid. Its subcellular location is the chloroplast thylakoid membrane. Its function is as follows. One of the components of the core complex of photosystem II (PSII). PSII is a light-driven water:plastoquinone oxidoreductase that uses light energy to abstract electrons from H(2)O, generating O(2) and a proton gradient subsequently used for ATP formation. It consists of a core antenna complex that captures photons, and an electron transfer chain that converts photonic excitation into a charge separation. In Morus indica (Mulberry), this protein is Photosystem II reaction center protein K.